Consider the following 693-residue polypeptide: TGF-beta-activated kinase 1 and MAP3K7-binding protein 2 (693 aa).

Residues 8–51 (IDFQVLHDLRQKFPEVPEVVVSRCMLQNNNNLDACCAVLSQEST) form the CUE domain. Residues 90–117 (HGREGSRVNGSRTLTHSVSDGQLQGGQS) are disordered. Positions 97–117 (VNGSRTLTHSVSDGQLQGGQS) are enriched in polar residues. Residue Arg173 is modified to Asymmetric dimethylarginine. A compositionally biased stretch (polar residues) spans 224–282 (GAARQTQQHSGWVSQFNPVNPQQAYQPSQPGPWTTYPASNPLPHTSTQQPNQQGHQTSH). A disordered region spans residues 224–310 (GAARQTQQHS…SASSQSSAHS (87 aa)). A compositionally biased stretch (low complexity) spans 286 to 310 (PISSPTTPQPPTVHSSASSQSSAHS). Residue Lys329 forms a Glycyl lysine isopeptide (Lys-Gly) (interchain with G-Cter in SUMO) linkage. Residues 330 to 361 (LEPPQRNSSSKLRSSGPRTASTSSLVNSQTLN) are disordered. The segment covering 334–361 (QRNSSSKLRSSGPRTASTSSLVNSQTLN) has biased composition (polar residues). Residues Ser372, Ser450, Ser482, and Ser524 each carry the phosphoserine modification. The stretch at 532–619 (YTQALLVHQK…TKEIDLFQAR (88 aa)) forms a coiled coil. Residue Lys562 forms a Glycyl lysine isopeptide (Lys-Gly) (interchain with G-Cter in SUMO) linkage. Residues 564 to 583 (EVNEMENSLTRRRLKRSNSM) form a disordered region. Ser582 is modified (phosphoserine). A Glycyl lysine isopeptide (Lys-Gly) (interchain with G-Cter in ubiquitin) cross-link involves residue Lys611. Residues 640-663 (PVPPKPKDQRSTIKAPKTQDTEDE) are disordered. The RanBP2-type zinc-finger motif lies at 663-693 (EEGAQWNCTACTFLNHPALIRCEQCEMPRHF). The interaction with polyubiquitin stretch occupies residues 675 to 685 (FLNHPALIRCE).

As to quaternary structure, interacts with MAP3K7 and TRAF6. Identified in the TRIKA2 complex composed of MAP3K7, TAB1 and TAB2. Binds 'Lys-63'-linked polyubiquitin chains. Interacts with NCOR1 and HDAC3 to form a ternary complex. Interacts (via C-terminal) with NUMBL (via PTB domain). Interacts (via the C-terminus) with DYNC2I2 (via WD domains). Interacts with RBCK1. Interacts with TRIM5. Interacts with TRIM38 (via B30.2/SPRY domain), leading to its translocation to lysosomes and degradation. Interacts with ASB1; this interaction promotes TAB2 stability. SUMOylated by TRIM60; leading to inhibition of MAPK/NF-kappaB activation and the innate immune response. In terms of processing, ubiquitinated; following IL1 stimulation or TRAF6 overexpression. Ubiquitination involves RBCK1 leading to proteasomal degradation. Ubiquitinated at Lys-611 by TRIM45 leading to proteasomal degradation. Post-translationally, degraded in a lysosome-dependent manner following interaction with TRIM38. Phosphorylated.

Its subcellular location is the membrane. The protein localises to the endosome membrane. The protein resides in the lysosome membrane. It localises to the cytoplasm. It is found in the cytosol. In terms of biological role, adapter required to activate the JNK and NF-kappa-B signaling pathways through the specific recognition of 'Lys-63'-linked polyubiquitin chains by its RanBP2-type zinc finger (NZF). Acts as an adapter linking MAP3K7/TAK1 and TRAF6 to 'Lys-63'-linked polyubiquitin chains. The RanBP2-type zinc finger (NZF) specifically recognizes Lys-63'-linked polyubiquitin chains unanchored or anchored to the substrate proteins such as RIPK1/RIP1 and RIPK2: this acts as a scaffold to organize a large signaling complex to promote autophosphorylation of MAP3K7/TAK1, and subsequent activation of I-kappa-B-kinase (IKK) core complex by MAP3K7/TAK1. Also recognizes and binds Lys-63'-linked polyubiquitin chains of heterotypic 'Lys-63'-/'Lys-48'-linked branched ubiquitin chains. Regulates the IL1-mediated translocation of NCOR1 out of the nucleus. Involved in heart development. The protein is TGF-beta-activated kinase 1 and MAP3K7-binding protein 2 (Tab2) of Rattus norvegicus (Rat).